The chain runs to 547 residues: Aspartate 1-decarboxylase (547 aa).

Position 338 is an N6-(pyridoxal phosphate)lysine (Lys-338).

Belongs to the group II decarboxylase family. Pyridoxal 5'-phosphate is required as a cofactor.

It carries out the reaction L-aspartate + H(+) = beta-alanine + CO2. It participates in cofactor biosynthesis; (R)-pantothenate biosynthesis; beta-alanine from L-aspartate: step 1/1. In terms of biological role, catalyzes the pyridoxal-dependent decarboxylation of aspartate to produce beta-alanine. Has weak activity with glutamate. The protein is Aspartate 1-decarboxylase of Aliivibrio fischeri (strain ATCC 700601 / ES114) (Vibrio fischeri).